A 647-amino-acid polypeptide reads, in one-letter code: A-type voltage-gated potassium channel KCND1 (647 aa).

Over 1-183 (MAAGLATWLP…RAFENPHTST (183 aa)) the chain is Cytoplasmic. The interaction with KCNIP1, KCNIP2, and other family members stretch occupies residues 2 to 20 (AAGLATWLPFARAAAVGWL). Zn(2+)-binding residues include His104, Cys131, and Cys132. Residues 144–163 (AERLAEDEEAEQAGDGPALP) form a disordered region. Residues 184–205 (AALVFYYVTGFFIAVSVIANVV) traverse the membrane as a helical segment. Residues 206–230 (ETIPCRGSARRSSREQPCGERFPQA) are Extracellular-facing. The helical transmembrane segment at 231–252 (FFCMDTACVLIFTGEYLLRLFA) threads the bilayer. At 253–263 (APSRCRFLRSV) the chain is on the cytoplasmic side. Residues 264–284 (MSLIDVVAILPYYIGLLVPKN) form a helical membrane-spanning segment. The Extracellular portion of the chain corresponds to 285–287 (DDV). The helical; Voltage-sensor transmembrane segment at 288–308 (SGAFVTLRVFRVFRIFKFSRH) threads the bilayer. Residues 309–323 (SQGLRILGYTLKSCA) are Cytoplasmic-facing. The segment at 310–323 (QGLRILGYTLKSCA) is S4-S5 linker. The helical transmembrane segment at 324 to 345 (SELGFLLFSLTMAIIIFATVMF) threads the bilayer. At 346 to 359 (YAEKGTNKTNFTSI) the chain is on the extracellular side. 2 N-linked (GlcNAc...) asparagine glycosylation sites follow: Asn352 and Asn355. The helical intramembrane region spans 360–371 (PAAFWYTIVTMT). Positions 372–377 (TLGYGD) match the Selectivity filter motif. An intramembrane segment occupies 372–379 (TLGYGDMV). The Extracellular portion of the chain corresponds to 380–386 (PSTIAGK). The chain crosses the membrane as a helical span at residues 387 to 415 (IFGSICSLSGVLVIALPVPVIVSNFSRIY). At 416–647 (HQNQRADKRR…FPETVKISSL (232 aa)) the chain is on the cytoplasmic side. Ser458 is subject to Phosphoserine. Residues 474 to 489 (FEQQHHHLLHCLEKTT) are required for dendritic targeting. Low complexity predominate over residues 506-524 (VSPGGRTSRSTSVSSQPVG). A disordered region spans residues 506-531 (VSPGGRTSRSTSVSSQPVGPGSLLSS). Position 555 is a phosphoserine (Ser555). The disordered stretch occupies residues 601 to 634 (IPTPPANTPDESQPSSPGGGGRAGSTLRNSSLGT).

It belongs to the potassium channel family. D (Shal) (TC 1.A.1.2) subfamily. Kv4.1/KCND1 sub-subfamily. Component of heteromultimeric potassium channels. Identified in potassium channel complexes containing KCND1, KCND2, KCND3, KCNIP1, KCNIP2, KCNIP3, KCNIP4, DPP6 and DPP10. In terms of tissue distribution, widely expressed. Highly expressed in brain, in particular in cerebellum and thalamus; detected at lower levels in the other parts of the brain.

The protein localises to the cell membrane. The catalysed reaction is K(+)(in) = K(+)(out). Its function is as follows. A-type voltage-gated potassium channel that mediates transmembrane potassium transport in excitable membranes in the brain. Mediates A-type current I(SA) in suprachiasmatic nucleus (SCN) neurons. Exhibits a low-threshold A-type current with a hyperpolarized steady-state inactivation midpoint and the recovery process was steeply voltage-dependent, with recovery being markedly faster at more negative potentials. May regulates repetitive firing rates in the suprachiasmatic nucleus (SCN) neurons and circadian rhythms in neuronal excitability and behavior. Contributes to the regulation of the circadian rhythm of action potential firing in suprachiasmatic nucleus neurons, which regulates the circadian rhythm of locomotor activity. The regulatory subunit KCNIP1 modulates the kinetics of channel inactivation, increases the current amplitudes and accelerates recovery from inactivation, shifts activation in a depolarizing direction. The regulatory subunit DPP10 decreases the voltage sensitivity of the inactivation channel gating. In Homo sapiens (Human), this protein is A-type voltage-gated potassium channel KCND1.